The primary structure comprises 283 residues: Tetraspanin-33 (283 aa).

Over 1-24 the chain is Cytoplasmic; it reads MARRPGAPAAYGEDFSFVSPLVKY. The helical transmembrane segment at 25-45 threads the bilayer; the sequence is LLFFFNMLFWVISMVMVAVGV. The Extracellular portion of the chain corresponds to 46 to 64; sequence YARLMKHEEAALACLAVDP. A helical membrane pass occupies residues 65–85; the sequence is AILLIVVGILMFLLTFCGCIG. The Cytoplasmic portion of the chain corresponds to 86–96; that stretch reads SLRENICLLQT. The chain crosses the membrane as a helical span at residues 97 to 117; the sequence is FSLCLTVVFLLQLAAGVLGFV. The Extracellular portion of the chain corresponds to 118–235; the sequence is FSDKVRGKVS…DRLVNWIHSN (118 aa). Cystine bridges form between Cys-156-Cys-224, Cys-157-Cys-189, Cys-173-Cys-183, and Cys-190-Cys-203. Residue Asn-172 is glycosylated (N-linked (GlcNAc...) asparagine). A helical membrane pass occupies residues 236–256; the sequence is LFVLGGVALGLAIPQLVGIML. The Cytoplasmic portion of the chain corresponds to 257–283; it reads SMILVSQIKDQIKLQLYNQQHRADPWY.

Belongs to the tetraspanin (TM4SF) family. Homodimer; disulfide-linked. Interacts (via extracellular domain) with ADAM10 (via extracellular domain). Interacts (via cytoplasmic domain) with PLEKHA7 (via WW domains); the interaction is dependent on PDZD11 being bound to PLEKHA7 and facilitates the docking of ADAM10 to zonula adherens.

It localises to the cell membrane. Its subcellular location is the cell junction. The protein localises to the adherens junction. The protein resides in the cytoplasm. Functionally, part of TspanC8 subgroup, composed of 6 members that interact with the transmembrane metalloprotease ADAM10. This interaction is required for ADAM10 exit from the endoplasmic reticulum and for enzymatic maturation and trafficking to the cell surface as well as substrate specificity. Different TspanC8/ADAM10 complexes have distinct substrates. Plays an important role in normal erythropoiesis. It has a role in the differentiation of erythroid progenitors. Negatively regulates ligand-induced Notch activity probably by regulating ADAM10 activity. Mediates docking of ADAM10 to zonula adherens by interacting with ADAM10 and, in a PDZD11-dependent manner, with the zonula adherens protein PLEKHA7. This is Tetraspanin-33 (TSPAN33) from Bos taurus (Bovine).